A 156-amino-acid polypeptide reads, in one-letter code: ATP synthase subunit b (156 aa).

A helical transmembrane segment spans residues 7–27; the sequence is IFFQMLVFFVLGWFTMKFVWP.

It belongs to the ATPase B chain family. As to quaternary structure, F-type ATPases have 2 components, F(1) - the catalytic core - and F(0) - the membrane proton channel. F(1) has five subunits: alpha(3), beta(3), gamma(1), delta(1), epsilon(1). F(0) has three main subunits: a(1), b(2) and c(10-14). The alpha and beta chains form an alternating ring which encloses part of the gamma chain. F(1) is attached to F(0) by a central stalk formed by the gamma and epsilon chains, while a peripheral stalk is formed by the delta and b chains.

Its subcellular location is the cell inner membrane. Functionally, f(1)F(0) ATP synthase produces ATP from ADP in the presence of a proton or sodium gradient. F-type ATPases consist of two structural domains, F(1) containing the extramembraneous catalytic core and F(0) containing the membrane proton channel, linked together by a central stalk and a peripheral stalk. During catalysis, ATP synthesis in the catalytic domain of F(1) is coupled via a rotary mechanism of the central stalk subunits to proton translocation. Component of the F(0) channel, it forms part of the peripheral stalk, linking F(1) to F(0). The sequence is that of ATP synthase subunit b from Bordetella bronchiseptica (strain ATCC BAA-588 / NCTC 13252 / RB50) (Alcaligenes bronchisepticus).